The following is a 122-amino-acid chain: Histone H2B 1 (122 aa).

The tract at residues 1–30 (MPPKPSAKGAKKAAKTVTKPKDGKKRRHAR) is disordered. Ser109 is a glycosylation site (O-linked (GlcNAc) serine). Lys117 is covalently cross-linked (Glycyl lysine isopeptide (Lys-Gly) (interchain with G-Cter in ubiquitin)).

The protein belongs to the histone H2B family. As to quaternary structure, the nucleosome is a histone octamer containing two molecules each of H2A, H2B, H3 and H4 assembled in one H3-H4 heterotetramer and two H2A-H2B heterodimers. The octamer wraps approximately 147 bp of DNA. Post-translationally, monoubiquitination of Lys-117 gives a specific tag for epigenetic transcriptional activation and is also prerequisite for histone H3 'Lys-4' and 'Lys-79' methylation. In terms of processing, glcNAcylation at Ser-109 promotes monoubiquitination of Lys-117. It fluctuates in response to extracellular glucose, and associates with transcribed genes.

It localises to the nucleus. It is found in the chromosome. Its function is as follows. Core component of nucleosome. Nucleosomes wrap and compact DNA into chromatin, limiting DNA accessibility to the cellular machineries which require DNA as a template. Histones thereby play a central role in transcription regulation, DNA repair, DNA replication and chromosomal stability. DNA accessibility is regulated via a complex set of post-translational modifications of histones, also called histone code, and nucleosome remodeling. The chain is Histone H2B 1 (his-11) from Caenorhabditis elegans.